A 494-amino-acid chain; its full sequence is UPF0371 protein SpyM3_1021 (494 aa).

This sequence belongs to the UPF0371 family.

The polypeptide is UPF0371 protein SpyM3_1021 (Streptococcus pyogenes serotype M3 (strain ATCC BAA-595 / MGAS315)).